Here is a 393-residue protein sequence, read N- to C-terminus: Lipoyl synthase, mitochondrial (393 aa).

[4Fe-4S] cluster is bound by residues cysteine 115, cysteine 120, cysteine 126, cysteine 146, cysteine 150, cysteine 153, and serine 362. One can recognise a Radical SAM core domain in the interval 131 to 351 (ETGTATATIM…RILGMDMGFR (221 aa)).

Belongs to the radical SAM superfamily. Lipoyl synthase family. It depends on [4Fe-4S] cluster as a cofactor.

The protein resides in the mitochondrion. It catalyses the reaction [[Fe-S] cluster scaffold protein carrying a second [4Fe-4S](2+) cluster] + N(6)-octanoyl-L-lysyl-[protein] + 2 oxidized [2Fe-2S]-[ferredoxin] + 2 S-adenosyl-L-methionine + 4 H(+) = [[Fe-S] cluster scaffold protein] + N(6)-[(R)-dihydrolipoyl]-L-lysyl-[protein] + 4 Fe(3+) + 2 hydrogen sulfide + 2 5'-deoxyadenosine + 2 L-methionine + 2 reduced [2Fe-2S]-[ferredoxin]. Its pathway is protein modification; protein lipoylation via endogenous pathway; protein N(6)-(lipoyl)lysine from octanoyl-[acyl-carrier-protein]: step 2/2. Its function is as follows. Catalyzes the radical-mediated insertion of two sulfur atoms into the C-6 and C-8 positions of the octanoyl moiety bound to the lipoyl domains of lipoate-dependent enzymes, thereby converting the octanoylated domains into lipoylated derivatives. This Vitis vinifera (Grape) protein is Lipoyl synthase, mitochondrial.